A 264-amino-acid chain; its full sequence is Proteasome subunit beta type-5 (264 aa).

The propeptide at 1–59 (MALASVLQRPMPVNQHGFFGLGGGADLLDLGPGSPGDGLSLAAPSWGVPEEPRIEMLHG) is removed in mature form. Thr-60 functions as the Nucleophile in the catalytic mechanism. Ala-108 is a binding site for bortezomib.

It belongs to the peptidase T1B family. In terms of assembly, the 26S proteasome consists of a 20S proteasome core and two 19S regulatory subunits. The 20S proteasome core is a barrel-shaped complex made of 28 subunits that are arranged in four stacked rings. The two outer rings are each formed by seven alpha subunits, and the two inner rings are formed by seven beta subunits. The proteolytic activity is exerted by three beta-subunits PSMB5, PSMB6 and PSMB7. Directly interacts with POMP. Interacts with ABCB1 and TAP1. Expressed in uterus at the embryo implantation site.

The protein resides in the cytoplasm. Its subcellular location is the nucleus. It catalyses the reaction Cleavage of peptide bonds with very broad specificity.. In terms of biological role, component of the 20S core proteasome complex involved in the proteolytic degradation of most intracellular proteins. This complex plays numerous essential roles within the cell by associating with different regulatory particles. Associated with two 19S regulatory particles, forms the 26S proteasome and thus participates in the ATP-dependent degradation of ubiquitinated proteins. The 26S proteasome plays a key role in the maintenance of protein homeostasis by removing misfolded or damaged proteins that could impair cellular functions, and by removing proteins whose functions are no longer required. Associated with the PA200 or PA28, the 20S proteasome mediates ubiquitin-independent protein degradation. This type of proteolysis is required in several pathways including spermatogenesis (20S-PA200 complex) or generation of a subset of MHC class I-presented antigenic peptides (20S-PA28 complex). Within the 20S core complex, PSMB5 displays a chymotrypsin-like activity. This Mus musculus (Mouse) protein is Proteasome subunit beta type-5 (Psmb5).